A 198-amino-acid chain; its full sequence is Ribonuclease HII (198 aa).

Positions 11–198 (NLIAGVDEVG…GPVKRVLGLV (188 aa)) constitute an RNase H type-2 domain. A divalent metal cation-binding residues include Asp-17, Glu-18, and Asp-109.

The protein belongs to the RNase HII family. Requires Mn(2+) as cofactor. The cofactor is Mg(2+).

It localises to the cytoplasm. It carries out the reaction Endonucleolytic cleavage to 5'-phosphomonoester.. In terms of biological role, endonuclease that specifically degrades the RNA of RNA-DNA hybrids. This Yersinia pseudotuberculosis serotype O:3 (strain YPIII) protein is Ribonuclease HII.